Consider the following 58-residue polypeptide: Ferredoxin-2 (58 aa).

4Fe-4S ferredoxin-type domains follow at residues 2–27 (IEVN…MNEE) and 30–58 (KAVV…IVRS). Residue C8 coordinates [3Fe-4S] cluster. C11 carries the cysteine methyl disulfide modification. C14 serves as a coordination point for [3Fe-4S] cluster. C18 and C42 are disulfide-bonded. C50 contacts [3Fe-4S] cluster.

As to quaternary structure, homodimer (ferredoxin I) or homotetramer (ferredoxin II). [3Fe-4S] cluster is required as a cofactor. The cofactor is [4Fe-4S] cluster.

Its function is as follows. Ferredoxins are iron-sulfur proteins that transfer electrons in a wide variety of metabolic reactions. The protein is Ferredoxin-2 of Megalodesulfovibrio gigas (Desulfovibrio gigas).